We begin with the raw amino-acid sequence, 512 residues long: MEELKGYLKKSRSKQQHFLYPLLFQEYIYAFAHDHGLNVNGSFFYEPAEISGYDKKFSSLLVKRLITRMYQQNYLINSVNDSNQNRFVGHNKNLYSQMISEVFAVIVEIPFSLRLVSFLAEKKEIPKSQNLRTIHSIFPFFEDKLSHLNCVSDILIPYPVHLEILVQILQCRIQDVPSLHLLRFFFHEYHNWNNLITPKKSNYYGFSKENPRLFLFLYNSYVVECESIFVFLRKQSSYLRSTSSGTFLERAHFYEKIEQHLVVLCCNDFQKTLWLFKDPFMHYVRYQGKSILASKGTHLLMKKWKSYFVNFWQCHFHFWSQPCRIHINQFSKFSFYFLGYLSSVPINPSAVKSQMLENSFLVDTVTKKFETIVPIIPMIGALSKAKFCNVSGNPISKPVWADLSDSDIIDRFGRTCRNLSHYYSGSSKKQSLYRIKYILRLSCARTLARKHKSTVRAFLQRLGSEFLEEFFTEEEKALSLILPRISYPLDKLYRERIWYLDIIRINDLVNHL.

It belongs to the intron maturase 2 family. MatK subfamily.

It localises to the plastid. Its subcellular location is the chloroplast. In terms of biological role, usually encoded in the trnK tRNA gene intron. Probably assists in splicing its own and other chloroplast group II introns. This is Maturase K from Amorphophallus paeoniifolius (Whitespot giant arum).